The primary structure comprises 611 residues: Translation initiation factor RLI1 (611 aa).

4Fe-4S ferredoxin-type domains lie at 7-31 (RVAIVNSDKCKPKKCRQECKKSCPV) and 46-75 (RIAFISEQLCIGCGICPKRCPFGAITIINL). ABC transporter domains follow at residues 77-318 (TNLE…FLDG) and 345-565 (AEKS…LKNL). ATP contacts are provided by residues 110–117 (GTNGIGKS) and 382–389 (GENGTGKT).

This sequence belongs to the ABC transporter superfamily. ABCE family. In terms of assembly, component of the multifactor complex (MFC). The complex associates with pre-initiation complexes.

The protein resides in the cytoplasm. The protein localises to the nucleus. Component of the multifactor complex (MFC) involved in translation initiation. Required for the binding of MFC to the 40S ribosome. Required for the processing and nuclear export of the 60S and 40S ribosomal subunits. The protein is Translation initiation factor RLI1 (RLI1) of Chaetomium thermophilum (strain DSM 1495 / CBS 144.50 / IMI 039719) (Thermochaetoides thermophila).